A 282-amino-acid chain; its full sequence is DegV domain-containing protein M6_Spy0690 (282 aa).

The 278-residue stretch at 3–280 folds into the DegV domain; it reads LAVITDSTAT…EGAIAFGVTP (278 aa). Positions 61 and 94 each coordinate hexadecanoate.

May bind long-chain fatty acids, such as palmitate, and may play a role in lipid transport or fatty acid metabolism. The sequence is that of DegV domain-containing protein M6_Spy0690 from Streptococcus pyogenes serotype M6 (strain ATCC BAA-946 / MGAS10394).